An 86-amino-acid polypeptide reads, in one-letter code: Large ribosomal subunit protein bL31B (86 aa).

The protein belongs to the bacterial ribosomal protein bL31 family. Type B subfamily. As to quaternary structure, part of the 50S ribosomal subunit.

The protein is Large ribosomal subunit protein bL31B of Ralstonia pickettii (strain 12J).